A 400-amino-acid chain; its full sequence is Large envelope protein (400 aa).

N-acetylmethionine is present on Met1. Residue Gly2 is the site of N-myristoyl glycine; by host attachment. The pre-S1 stretch occupies residues 2 to 119 (GGWSSKHRKG…PPLRDTHPQA (118 aa)). Residues 2 to 174 (GGWSSKHRKG…FTKTGDPASN (173 aa)) are pre-S. Residues 2–181 (GGWSSKHRKG…ASNMESTTSG (180 aa)) lie on the Virion surface; in external conformation side of the membrane. Residues 2 to 253 (GGWSSKHRKG…PGYRWMCLRR (252 aa)) lie on the Intravirion; in internal conformation side of the membrane. Trp4 carries an N-linked (GlcNAc...) asparagine glycan. Residues 89-117 (PAAPPPASTNRQSGRQPTPISPPLRDTHP) are disordered. Residues 96 to 106 (STNRQSGRQPT) show a composition bias toward polar residues. Residues 120-174 (MQWNSTAFHQALQDPRVRGLYFPAGGSSSGTVNPVPNTVSHISSIFTKTGDPASN) are pre-S2. Residues 182–202 (FLGPLLVLQAGFFLLTRILTI) traverse the membrane as a helical segment. Over 203–253 (PQSLDSWWTSLNFLGGAPGCIGQNSQSQTSNHSPTSCPPTCPGYRWMCLRR) the chain is Intravirion; in external conformation. A helical transmembrane segment spans residues 254 to 274 (FIIFLFILLLCLIFLLVLLDY). Topologically, residues 275–348 (QGMLPVCPLL…WASVRFSWLS (74 aa)) are virion surface. The N-linked (GlcNAc...) asparagine; by host glycan is linked to Asn320. Residues 349 to 369 (LLVPFVQWFAGLSPTVWLSVI) form a helical membrane-spanning segment. Over 370-375 (WMIWYW) the chain is Intravirion. A helical membrane pass occupies residues 376 to 398 (GPSLYNILSPFLPLLPIFLCLWV). Topologically, residues 399–400 (YI) are virion surface.

It belongs to the orthohepadnavirus major surface antigen family. In its internal form (Li-HBsAg), interacts with the capsid protein and with the isoform S. Interacts with host chaperone CANX. In terms of assembly, associates with host chaperone CANX through its pre-S2 N glycan; this association may be essential for isoform M proper secretion. As to quaternary structure, interacts with isoform L. Interacts with the antigens of satellite virus HDV (HDVAgs); this interaction is required for encapsidation of HDV genomic RNA. Post-translationally, isoform M is N-terminally acetylated by host at a ratio of 90%, and N-glycosylated by host at the pre-S2 region. In terms of processing, myristoylated.

It localises to the virion membrane. In terms of biological role, the large envelope protein exists in two topological conformations, one which is termed 'external' or Le-HBsAg and the other 'internal' or Li-HBsAg. In its external conformation the protein attaches the virus to cell receptors and thereby initiating infection. This interaction determines the species specificity and liver tropism. This attachment induces virion internalization predominantly through caveolin-mediated endocytosis. The large envelope protein also assures fusion between virion membrane and endosomal membrane. In its internal conformation the protein plays a role in virion morphogenesis and mediates the contact with the nucleocapsid like a matrix protein. Functionally, the middle envelope protein plays an important role in the budding of the virion. It is involved in the induction of budding in a nucleocapsid independent way. In this process the majority of envelope proteins bud to form subviral lipoprotein particles of 22 nm of diameter that do not contain a nucleocapsid. The protein is Large envelope protein of Homo sapiens (Human).